The primary structure comprises 198 residues: Lipoprotein signal peptidase (198 aa).

The segment at methionine 1–proline 34 is disordered. The span at alanine 12–proline 26 shows a compositional bias: acidic residues. The next 3 helical transmembrane spans lie at leucine 42–valine 62, methionine 92–valine 112, and serine 120–aspartate 140. Residues aspartate 155 and aspartate 169 contribute to the active site. Residues valine 167–leucine 187 traverse the membrane as a helical segment.

Belongs to the peptidase A8 family.

The protein resides in the cell membrane. It catalyses the reaction Release of signal peptides from bacterial membrane prolipoproteins. Hydrolyzes -Xaa-Yaa-Zaa-|-(S,diacylglyceryl)Cys-, in which Xaa is hydrophobic (preferably Leu), and Yaa (Ala or Ser) and Zaa (Gly or Ala) have small, neutral side chains.. The protein operates within protein modification; lipoprotein biosynthesis (signal peptide cleavage). In terms of biological role, this protein specifically catalyzes the removal of signal peptides from prolipoproteins. The chain is Lipoprotein signal peptidase from Rhodococcus jostii (strain RHA1).